A 219-amino-acid chain; its full sequence is ATP-dependent dethiobiotin synthetase BioD (219 aa).

12–17 (GVGKTI) serves as a coordination point for ATP. T16 serves as a coordination point for Mg(2+). The active site involves K32. ATP is bound by residues D43 and 96-99 (ETSG). The Mg(2+) site is built by D43 and E96.

Belongs to the dethiobiotin synthetase family. Homodimer. Mg(2+) serves as cofactor.

It localises to the cytoplasm. It catalyses the reaction (7R,8S)-7,8-diammoniononanoate + CO2 + ATP = (4R,5S)-dethiobiotin + ADP + phosphate + 3 H(+). It participates in cofactor biosynthesis; biotin biosynthesis; biotin from 7,8-diaminononanoate: step 1/2. In terms of biological role, catalyzes a mechanistically unusual reaction, the ATP-dependent insertion of CO2 between the N7 and N8 nitrogen atoms of 7,8-diaminopelargonic acid (DAPA, also called 7,8-diammoniononanoate) to form a ureido ring. The chain is ATP-dependent dethiobiotin synthetase BioD from Chlamydia pneumoniae (Chlamydophila pneumoniae).